Here is a 484-residue protein sequence, read N- to C-terminus: L-amino-acid oxidase (484 aa).

Cys-8 and Cys-171 form a disulfide bridge. FAD is bound by residues 41-42, 61-62, and Arg-69; these read MS and EA. His-73 provides a ligand contact to Zn(2+). 85-88 is a binding site for FAD; sequence GPMR. Arg-88 is a binding site for substrate. Residue Asn-170 is glycosylated (N-linked (GlcNAc...) asparagine). His-221 contributes to the substrate binding site. Val-259 contacts FAD. Glu-277 serves as a coordination point for Zn(2+). The cysteines at positions 329 and 410 are disulfide-linked. Position 370 (Tyr-370) interacts with substrate. FAD-binding positions include Glu-455 and 462–467; that span reads GWIDST. Residue 462–463 coordinates substrate; sequence GW.

Belongs to the flavin monoamine oxidase family. FIG1 subfamily. As to quaternary structure, homodimer; non-covalently linked. Requires FAD as cofactor. Expressed by the venom gland.

It is found in the secreted. It carries out the reaction an L-alpha-amino acid + O2 + H2O = a 2-oxocarboxylate + H2O2 + NH4(+). Functionally, catalyzes an oxidative deamination of predominantly hydrophobic and aromatic L-amino acids, thus producing hydrogen peroxide that may contribute to the diverse toxic effects of this enzyme. Exhibits diverse biological activities, such as hemorrhage, hemolysis, edema, apoptosis of vascular endothelial cells or tumor cell lines, antibacterial and antiparasitic activities, as well as regulation of platelet aggregation. Effects of snake L-amino oxidases on platelets are controversial, since they either induce aggregation or inhibit agonist-induced aggregation. These different effects are probably due to different experimental conditions. This is L-amino-acid oxidase from Vipera ammodytes ammodytes (Western sand viper).